We begin with the raw amino-acid sequence, 567 residues long: Urease subunit alpha (567 aa).

One can recognise a Urease domain in the interval 129-567 (GGIDAHIHFI…LPLAQLYCLF (439 aa)). The Ni(2+) site is built by His-134, His-136, and Lys-217. Lys-217 carries the post-translational modification N6-carboxylysine. His-219 provides a ligand contact to substrate. The Ni(2+) site is built by His-246 and His-272. His-320 (proton donor) is an active-site residue. Asp-360 contacts Ni(2+).

The protein belongs to the metallo-dependent hydrolases superfamily. Urease alpha subunit family. As to quaternary structure, heterotrimer of UreA (gamma), UreB (beta) and UreC (alpha) subunits. Three heterotrimers associate to form the active enzyme. The cofactor is Ni cation. In terms of processing, carboxylation allows a single lysine to coordinate two nickel ions.

It localises to the cytoplasm. It catalyses the reaction urea + 2 H2O + H(+) = hydrogencarbonate + 2 NH4(+). It functions in the pathway nitrogen metabolism; urea degradation; CO(2) and NH(3) from urea (urease route): step 1/1. The sequence is that of Urease subunit alpha from Alteromonas mediterranea (strain DSM 17117 / CIP 110805 / LMG 28347 / Deep ecotype).